The following is a 142-amino-acid chain: RNA polymerase-binding transcription factor DksA (142 aa).

Disordered stretches follow at residues M1–P20, H51–T70, and R119–D142. The dksA C4-type zinc-finger motif lies at C104–A128. Residues A128–D142 show a composition bias toward basic and acidic residues.

Belongs to the DksA family. In terms of assembly, interacts directly with the RNA polymerase.

The protein localises to the cytoplasm. Its function is as follows. Transcription factor that acts by binding directly to the RNA polymerase (RNAP). Required for negative regulation of rRNA expression and positive regulation of several amino acid biosynthesis promoters. This chain is RNA polymerase-binding transcription factor DksA, found in Caulobacter vibrioides (strain ATCC 19089 / CIP 103742 / CB 15) (Caulobacter crescentus).